The sequence spans 250 residues: uncharacterized protein (250 aa).

6 4Fe-4S ferredoxin-type domains span residues 38 to 67 (KLLY…KAKV), 69 to 98 (KSAK…VIEG), 124 to 153 (KKYE…AVRR), 154 to 183 (KSIE…VERE), 191 to 220 (RDIE…QDGD), and 220 to 249 (DKVK…MWEK). Residues cysteine 47, cysteine 50, cysteine 53, cysteine 57, cysteine 78, cysteine 81, cysteine 84, cysteine 88, cysteine 133, cysteine 136, cysteine 139, cysteine 143, cysteine 163, cysteine 166, cysteine 169, cysteine 173, cysteine 200, cysteine 203, cysteine 206, cysteine 210, cysteine 229, cysteine 232, cysteine 235, and cysteine 239 each contribute to the [4Fe-4S] cluster site.

This is an uncharacterized protein from Methanocaldococcus jannaschii (strain ATCC 43067 / DSM 2661 / JAL-1 / JCM 10045 / NBRC 100440) (Methanococcus jannaschii).